We begin with the raw amino-acid sequence, 162 residues long: NADH-quinone oxidoreductase subunit I (162 aa).

4Fe-4S ferredoxin-type domains are found at residues arginine 54–glutamate 83 and threonine 93–isoleucine 122. Residues cysteine 63, cysteine 66, cysteine 69, cysteine 73, cysteine 102, cysteine 105, cysteine 108, and cysteine 112 each coordinate [4Fe-4S] cluster.

The protein belongs to the complex I 23 kDa subunit family. In terms of assembly, NDH-1 is composed of 14 different subunits. Subunits NuoA, H, J, K, L, M, N constitute the membrane sector of the complex. The cofactor is [4Fe-4S] cluster.

It is found in the cell inner membrane. It catalyses the reaction a quinone + NADH + 5 H(+)(in) = a quinol + NAD(+) + 4 H(+)(out). Its function is as follows. NDH-1 shuttles electrons from NADH, via FMN and iron-sulfur (Fe-S) centers, to quinones in the respiratory chain. The immediate electron acceptor for the enzyme in this species is believed to be ubiquinone. Couples the redox reaction to proton translocation (for every two electrons transferred, four hydrogen ions are translocated across the cytoplasmic membrane), and thus conserves the redox energy in a proton gradient. This chain is NADH-quinone oxidoreductase subunit I, found in Burkholderia mallei (strain NCTC 10247).